We begin with the raw amino-acid sequence, 151 residues long: Nucleoside diphosphate kinase (151 aa).

ATP-binding residues include Lys11, Phe59, Arg87, Thr93, Arg104, and Asn114. The Pros-phosphohistidine intermediate role is filled by His117.

Belongs to the NDK family. Homohexamer. Mg(2+) is required as a cofactor.

It carries out the reaction a 2'-deoxyribonucleoside 5'-diphosphate + ATP = a 2'-deoxyribonucleoside 5'-triphosphate + ADP. The catalysed reaction is a ribonucleoside 5'-diphosphate + ATP = a ribonucleoside 5'-triphosphate + ADP. Functionally, major role in the synthesis of nucleoside triphosphates other than ATP. The ATP gamma phosphate is transferred to the NDP beta phosphate via a ping-pong mechanism, using a phosphorylated active-site intermediate. This Ginglymostoma cirratum (Nurse shark) protein is Nucleoside diphosphate kinase.